The sequence spans 373 residues: UDP-glucose 4-epimerase 3 (373 aa).

An NAD(+)-binding site is contributed by 27 to 58 (SVLVTGGAGYIGTHTVLRLLEKGFAVTVVDNF). Ser-153 serves as a coordination point for substrate. Tyr-177 serves as the catalytic Proton acceptor.

This sequence belongs to the NAD(P)-dependent epimerase/dehydratase family. It depends on NAD(+) as a cofactor.

The catalysed reaction is UDP-alpha-D-glucose = UDP-alpha-D-galactose. The protein operates within carbohydrate metabolism; galactose metabolism. Catalyzes the interconversion between UDP-glucose and UDP-galactose. The protein is UDP-glucose 4-epimerase 3 (UGE-3) of Oryza sativa subsp. japonica (Rice).